Here is a 146-residue protein sequence, read N- to C-terminus: Small ribosomal subunit protein uS5 (146 aa).

The S5 DRBM domain maps to 8-71; that stretch reads FKEVVVNIGR…DDAFKNIIKV (64 aa).

The protein belongs to the universal ribosomal protein uS5 family. As to quaternary structure, part of the 30S ribosomal subunit. Contacts proteins S4 and S8.

With S4 and S12 plays an important role in translational accuracy. Its function is as follows. Located at the back of the 30S subunit body where it stabilizes the conformation of the head with respect to the body. In Wolinella succinogenes (strain ATCC 29543 / DSM 1740 / CCUG 13145 / JCM 31913 / LMG 7466 / NCTC 11488 / FDC 602W) (Vibrio succinogenes), this protein is Small ribosomal subunit protein uS5.